The primary structure comprises 596 residues: ATP-binding protein Uup (596 aa).

2 consecutive ABC transporter domains span residues M1–K222 and F290–N516. ATP is bound by residues G36–S43 and G322–S329. The segment at I519–I596 is C-terminal domain (CTD), binds DNA.

The protein belongs to the ABC transporter superfamily. ABCF family. Uup subfamily.

The protein resides in the cytoplasm. The enzyme catalyses ATP + H2O = ADP + phosphate + H(+). In terms of biological role, probably plays a role in ribosome assembly or function. May be involved in resolution of branched DNA intermediates that result from template switching in postreplication gaps. Binds DNA and has ATPase activity. The polypeptide is ATP-binding protein Uup (Buchnera aphidicola subsp. Acyrthosiphon pisum (strain APS) (Acyrthosiphon pisum symbiotic bacterium)).